The sequence spans 705 residues: Ribosomal RNA large subunit methyltransferase K/L (705 aa).

A THUMP domain is found at 43 to 154; that stretch reads LMYQSLMWSR…KDTASIALDL (112 aa).

The protein belongs to the methyltransferase superfamily. RlmKL family.

The protein localises to the cytoplasm. The enzyme catalyses guanosine(2445) in 23S rRNA + S-adenosyl-L-methionine = N(2)-methylguanosine(2445) in 23S rRNA + S-adenosyl-L-homocysteine + H(+). The catalysed reaction is guanosine(2069) in 23S rRNA + S-adenosyl-L-methionine = N(2)-methylguanosine(2069) in 23S rRNA + S-adenosyl-L-homocysteine + H(+). Specifically methylates the guanine in position 2445 (m2G2445) and the guanine in position 2069 (m7G2069) of 23S rRNA. The chain is Ribosomal RNA large subunit methyltransferase K/L from Erwinia tasmaniensis (strain DSM 17950 / CFBP 7177 / CIP 109463 / NCPPB 4357 / Et1/99).